The sequence spans 508 residues: Light-independent protochlorophyllide reductase subunit B (508 aa).

D36 provides a ligand contact to [4Fe-4S] cluster. D294 acts as the Proton donor in catalysis. 429-430 contributes to the substrate binding site; the sequence is GM.

This sequence belongs to the ChlB/BchB/BchZ family. As to quaternary structure, protochlorophyllide reductase is composed of three subunits; ChlL, ChlN and ChlB. Forms a heterotetramer of two ChlB and two ChlN subunits. [4Fe-4S] cluster is required as a cofactor.

The enzyme catalyses chlorophyllide a + oxidized 2[4Fe-4S]-[ferredoxin] + 2 ADP + 2 phosphate = protochlorophyllide a + reduced 2[4Fe-4S]-[ferredoxin] + 2 ATP + 2 H2O. The protein operates within porphyrin-containing compound metabolism; chlorophyll biosynthesis (light-independent). Its function is as follows. Component of the dark-operative protochlorophyllide reductase (DPOR) that uses Mg-ATP and reduced ferredoxin to reduce ring D of protochlorophyllide (Pchlide) to form chlorophyllide a (Chlide). This reaction is light-independent. The NB-protein (ChlN-ChlB) is the catalytic component of the complex. This Acaryochloris marina (strain MBIC 11017) protein is Light-independent protochlorophyllide reductase subunit B.